Reading from the N-terminus, the 146-residue chain is 3-dehydroquinate dehydratase (146 aa).

Catalysis depends on Y23, which acts as the Proton acceptor. Substrate-binding residues include N74, H80, and D87. The active-site Proton donor is the H100. Substrate contacts are provided by residues 101–102 and R111; that span reads IS.

Belongs to the type-II 3-dehydroquinase family. Homododecamer.

It catalyses the reaction 3-dehydroquinate = 3-dehydroshikimate + H2O. Its pathway is metabolic intermediate biosynthesis; chorismate biosynthesis; chorismate from D-erythrose 4-phosphate and phosphoenolpyruvate: step 3/7. Catalyzes a trans-dehydration via an enolate intermediate. This Bacillus cereus (strain ATCC 14579 / DSM 31 / CCUG 7414 / JCM 2152 / NBRC 15305 / NCIMB 9373 / NCTC 2599 / NRRL B-3711) protein is 3-dehydroquinate dehydratase.